The chain runs to 574 residues: (R)-mandelonitrile lyase 4 (574 aa).

Positions 1 to 27 (MEKSTMSAVVLVLNLLVLHLQYSEVHS) are cleaved as a signal peptide. Asparagine 30 carries an N-linked (GlcNAc...) asparagine glycan. 64-65 (TS) is an FAD binding site. A glycan (N-linked (GlcNAc...) asparagine) is linked at asparagine 76. FAD contacts are provided by residues 83 to 84 (ER), threonine 134, and 138 to 141 (NAGV). Residues asparagine 146, asparagine 151, and asparagine 179 are each glycosylated (N-linked (GlcNAc...) asparagine). Valine 245 lines the FAD pocket. N-linked (GlcNAc...) asparagine glycosylation is found at asparagine 268 and asparagine 310. Cysteine 357 provides a ligand contact to substrate. Residues asparagine 381, asparagine 407, and asparagine 468 are each glycosylated (N-linked (GlcNAc...) asparagine). Cysteine 428 and cysteine 479 are oxidised to a cystine. Residue tyrosine 486 participates in substrate binding. FAD contacts are provided by residues 487 to 488 (WH) and glycine 516. Histidine 488 functions as the Proton donor in the catalytic mechanism. Histidine 526 acts as the Proton acceptor in catalysis. 527-528 (PQ) contacts FAD.

This sequence belongs to the GMC oxidoreductase family. As to quaternary structure, monomer. The cofactor is FAD.

It is found in the vacuole. The protein localises to the aleurone grain. The catalysed reaction is (R)-mandelonitrile = benzaldehyde + hydrogen cyanide. Involved in cyanogenesis, the release of HCN from injured tissues. Catalyzes the stereospecific addition of HCN to a variety of aldehydes in vitro. It is a major seed constituent, and could have the additional role of a storage form for reduced nitrogen. The sequence is that of (R)-mandelonitrile lyase 4 (MDL4) from Prunus serotina (Black cherry).